The primary structure comprises 904 residues: MICAL-like protein 2 (904 aa).

One can recognise a Calponin-homology (CH) domain in the interval 1-107 (MAAIRALQQW…YVSQYYNYFH (107 aa)). A forms an intramolecular interaction with the C-terminal coiled coil domain keeping the protein in a closed conformation region spans residues 1-260 (MAAIRALQQW…KLTGLVPRQP (260 aa)). Ser-110, Ser-143, and Ser-153 each carry phosphoserine. Residues 117–178 (GVKRASEDSE…GGPPPKTDQA (62 aa)) are disordered. The span at 143 to 153 (SPAPARKPPLS) shows a compositional bias: pro residues. The LIM zinc-binding domain maps to 186 to 248 (STCGVCGKHV…TSHLPAAASA (63 aa)). Ser-249 carries the post-translational modification Phosphoserine. A disordered region spans residues 251-722 (KLTGLVPRQP…PANVPALPGE (472 aa)). Positions 261 to 388 (GAMGVDSRTS…GGAPRVAAPQ (128 aa)) are necessary and sufficient for interaction with actinins. The interval 261–697 (GAMGVDSRTS…EARVQSWKEE (437 aa)) is mediates targeting to the cell plasma membrane. The span at 267–277 (SRTSCSPQKAQ) shows a compositional bias: polar residues. Low complexity-rich tracts occupy residues 293–314 (NSPARASVPAAPNPAATSATSV) and 349–362 (SSAAPCTAAAASHP). Ser-294 carries the phosphoserine modification. Residues 363–374 (AVPPSAPDPRPA) are compositionally biased toward pro residues. Low complexity predominate over residues 385–400 (AAPQTTLSSSSTSAAT). A compositionally biased stretch (polar residues) spans 408-433 (PSASRTQQARNKFFQTSAVPPGTSLS). Over residues 459–480 (ALSALEEAGAPAPGRPSPATAA) the composition is skewed to low complexity. Phosphoserine is present on residues Ser-494 and Ser-504. Composition is skewed to low complexity over residues 520–534 (LSTSSTSQASALPPA) and 542–553 (SSGVGRVGAGSR). Polar residues predominate over residues 564 to 578 (KSTTLTQDMSTSLQE). The span at 593–622 (PVDRRSPAERTLKPKEPRALAEPRAGEAPR) shows a compositional bias: basic and acidic residues. Ser-598 carries the post-translational modification Phosphoserine. Position 644 is a phosphothreonine (Thr-644). Over residues 647–661 (PASPGPSLPARSPSP) the composition is skewed to pro residues. Ser-649, Ser-658, Ser-660, and Ser-726 each carry phosphoserine. Residues 698-807 (EKKPHLQGKP…LMYKSKAQRL (110 aa)) form a forms an intramolecular interaction with the N-terminal Calponin-homology and LIM zinc-binding domains-containing region keeping the protein in a closed conformation region. Residues 723-874 (TVTSPVRLHP…EQEEDQMLRD (152 aa)) form the bMERB domain. The stretch at 735–771 (LSPEEIQRQLQDIERRLDALELRGVELEKRLRAAEGD) forms a coiled coil. The segment at 807 to 903 (LEEQQLDIEG…WSPKSKSSPS (97 aa)) is mediates interaction with RAB13 and is required for transition from the closed to the opened conformation.

In terms of assembly, interacts with RAB13 (GTP-bound form); competes with RAB8A and is involved in tight junctions assembly. Interacts with RAB8A; competes with RAB13 and is involved in E-cadherin endocytic recycling. Interacts with RAB8B. Interacts (preferentially in opened conformation) with ACTN1 and ACTN4; stimulated by RAB13 activation. Interacts (via calponin-homology (CH) domain) with the filamins FLNA, FLNB and FLNC (via actin-binding domain).

It localises to the cell membrane. It is found in the cell junction. The protein resides in the tight junction. Its subcellular location is the recycling endosome. The protein localises to the cell projection. It localises to the cytoplasm. It is found in the cytoskeleton. Its function is as follows. Effector of small Rab GTPases which is involved in junctional complexes assembly through the regulation of cell adhesion molecules transport to the plasma membrane and actin cytoskeleton reorganization. Regulates the endocytic recycling of occludins, claudins and E-cadherin to the plasma membrane and may thereby regulate the establishment of tight junctions and adherens junctions. In parallel, may regulate actin cytoskeleton reorganization directly through interaction with F-actin or indirectly through actinins and filamins. Most probably involved in the processes of epithelial cell differentiation, cell spreading and neurite outgrowth. Undergoes liquid-liquid phase separation to form tubular recycling endosomes. Plays 2 sequential roles in the biogenesis of tubular recycling endosomes: first organizes phase separation and then the closed form formed by interaction with RAB8A promotes endosomal tubulation. This chain is MICAL-like protein 2, found in Homo sapiens (Human).